The sequence spans 322 residues: 4-diphosphocytidyl-2-C-methyl-D-erythritol kinase (322 aa).

K25 is a catalytic residue. 110 to 120 (PVAGGMAGGSA) is a binding site for ATP. D152 is an active-site residue.

It belongs to the GHMP kinase family. IspE subfamily.

It carries out the reaction 4-CDP-2-C-methyl-D-erythritol + ATP = 4-CDP-2-C-methyl-D-erythritol 2-phosphate + ADP + H(+). It participates in isoprenoid biosynthesis; isopentenyl diphosphate biosynthesis via DXP pathway; isopentenyl diphosphate from 1-deoxy-D-xylulose 5-phosphate: step 3/6. Its function is as follows. Catalyzes the phosphorylation of the position 2 hydroxy group of 4-diphosphocytidyl-2C-methyl-D-erythritol. In Mycolicibacterium gilvum (strain PYR-GCK) (Mycobacterium gilvum (strain PYR-GCK)), this protein is 4-diphosphocytidyl-2-C-methyl-D-erythritol kinase.